The sequence spans 227 residues: Small ribosomal subunit protein uS3 (227 aa).

Residues 38–106 form the KH type-2 domain; the sequence is LRKYLREKLA…EVHLNIVEIR (69 aa).

The protein belongs to the universal ribosomal protein uS3 family. In terms of assembly, part of the 30S ribosomal subunit. Forms a tight complex with proteins S10 and S14.

Functionally, binds the lower part of the 30S subunit head. Binds mRNA in the 70S ribosome, positioning it for translation. The sequence is that of Small ribosomal subunit protein uS3 from Paramagnetospirillum magneticum (strain ATCC 700264 / AMB-1) (Magnetospirillum magneticum).